The primary structure comprises 534 residues: NAD(P)H-quinone oxidoreductase subunit 2 (534 aa).

14 helical membrane passes run isoleucine 15 to leucine 35, tryptophan 42 to tryptophan 62, leucine 79 to isoleucine 99, leucine 109 to alanine 129, leucine 132 to tyrosine 152, leucine 167 to leucine 187, leucine 210 to alanine 230, proline 244 to isoleucine 264, phenylalanine 280 to glutamine 300, methionine 306 to threonine 326, isoleucine 334 to phenylalanine 354, leucine 378 to glycine 398, glycine 410 to valine 432, and valine 466 to phenylalanine 486.

This sequence belongs to the complex I subunit 2 family. In terms of assembly, NDH-1 can be composed of about 15 different subunits; different subcomplexes with different compositions have been identified which probably have different functions.

The protein localises to the cellular thylakoid membrane. The catalysed reaction is a plastoquinone + NADH + (n+1) H(+)(in) = a plastoquinol + NAD(+) + n H(+)(out). The enzyme catalyses a plastoquinone + NADPH + (n+1) H(+)(in) = a plastoquinol + NADP(+) + n H(+)(out). Functionally, NDH-1 shuttles electrons from an unknown electron donor, via FMN and iron-sulfur (Fe-S) centers, to quinones in the respiratory and/or the photosynthetic chain. The immediate electron acceptor for the enzyme in this species is believed to be plastoquinone. Couples the redox reaction to proton translocation, and thus conserves the redox energy in a proton gradient. Cyanobacterial NDH-1 also plays a role in inorganic carbon-concentration. In Nostoc punctiforme (strain ATCC 29133 / PCC 73102), this protein is NAD(P)H-quinone oxidoreductase subunit 2.